The primary structure comprises 232 residues: Glutathione S-transferase E14 (232 aa).

One can recognise a GST N-terminal domain in the interval 4-85; sequence PKPILYYDER…HLAEKFDEGG (82 aa). One can recognise a GST C-terminal domain in the interval 91–218; it reads EHAERMKVLN…RQTMESVGSF (128 aa).

This sequence belongs to the GST superfamily. Epsilon family. Expressed in the adult ovary (at protein level).

The enzyme catalyses RX + glutathione = an S-substituted glutathione + a halide anion + H(+). In terms of biological role, conjugation of reduced glutathione to a wide number of exogenous and endogenous hydrophobic electrophiles. Essential for ecdysteroid biosynthesis. May be involved in detoxification. This Drosophila melanogaster (Fruit fly) protein is Glutathione S-transferase E14.